The following is a 156-amino-acid chain: MTMKNVQAFTDGSCLGNPGPGGWAAVLRCNGSERELSGGFALTTNNRMEILAVIEALALLKEPCGVDLYTDSQYVRNAVEKKWLAGWRRNGWKTSDKKPVKNRDLWERLQPLLDLHQVRFHWVRGHSGHPENERCDVLARTQASSRGLPPDTGYRE.

Residues 2 to 144 (TMKNVQAFTD…CDVLARTQAS (143 aa)) enclose the RNase H type-1 domain. Aspartate 11, glutamate 49, aspartate 71, and aspartate 136 together coordinate Mg(2+).

The protein belongs to the RNase H family. As to quaternary structure, monomer. Mg(2+) serves as cofactor.

The protein resides in the cytoplasm. The enzyme catalyses Endonucleolytic cleavage to 5'-phosphomonoester.. Endonuclease that specifically degrades the RNA of RNA-DNA hybrids. The protein is Ribonuclease H of Nitratidesulfovibrio vulgaris (strain DSM 19637 / Miyazaki F) (Desulfovibrio vulgaris).